A 546-amino-acid chain; its full sequence is CTP synthase (546 aa).

Residues 1-267 (MSKFVFVTGG…AQQTLELLNL (267 aa)) are amidoligase domain. Residue Ser13 participates in CTP binding. Ser13 contacts UTP. ATP-binding positions include 14–19 (SIGKGI) and Asp71. Asp71 and Glu141 together coordinate Mg(2+). CTP contacts are provided by residues 148–150 (DIE), 188–193 (KTKPTQ), and Lys224. Residues 188 to 193 (KTKPTQ) and Lys224 contribute to the UTP site. The region spanning 292-534 (EIAIVGKYVQ…MKAALKGREE (243 aa)) is the Glutamine amidotransferase type-1 domain. Gly354 lines the L-glutamine pocket. Cys381 (nucleophile; for glutamine hydrolysis) is an active-site residue. Residues 382-385 (LGMQ), Glu405, and Arg462 each bind L-glutamine. Active-site residues include His507 and Glu509.

Belongs to the CTP synthase family. As to quaternary structure, homotetramer.

The catalysed reaction is UTP + L-glutamine + ATP + H2O = CTP + L-glutamate + ADP + phosphate + 2 H(+). It carries out the reaction L-glutamine + H2O = L-glutamate + NH4(+). The enzyme catalyses UTP + NH4(+) + ATP = CTP + ADP + phosphate + 2 H(+). It functions in the pathway pyrimidine metabolism; CTP biosynthesis via de novo pathway; CTP from UDP: step 2/2. Its activity is regulated as follows. Allosterically activated by GTP, when glutamine is the substrate; GTP has no effect on the reaction when ammonia is the substrate. The allosteric effector GTP functions by stabilizing the protein conformation that binds the tetrahedral intermediate(s) formed during glutamine hydrolysis. Inhibited by the product CTP, via allosteric rather than competitive inhibition. In terms of biological role, catalyzes the ATP-dependent amination of UTP to CTP with either L-glutamine or ammonia as the source of nitrogen. Regulates intracellular CTP levels through interactions with the four ribonucleotide triphosphates. The protein is CTP synthase of Microcystis aeruginosa (strain NIES-843 / IAM M-2473).